A 498-amino-acid polypeptide reads, in one-letter code: Trichoplein keratin filament-binding protein (498 aa).

The stretch at 11 to 39 forms a coiled coil; that stretch reads CSQQRLNQQLARQREQEARLRQQWEQNSR. Residues Lys-50 and Lys-57 each participate in a glycyl lysine isopeptide (Lys-Gly) (interchain with G-Cter in ubiquitin) cross-link. Coiled coils occupy residues 66 to 136, 163 to 353, and 380 to 479; these read AYQR…LIAE, VNSW…LREE, and LTGR…EAET. Positions 73–498 are interaction with keratin proteins; it reads KEEKRRSLEA…PYGHPKIAWN (426 aa). The disordered stretch occupies residues 167-189; the sequence is EMQKEEKKQQEATAEQENKRYEN. Positions 168–189 are enriched in basic and acidic residues; that stretch reads MQKEEKKQQEATAEQENKRYEN. Residues 259 to 425 are trichohyalin/plectin homology domain; it reads KQMEAFRQKA…RELARREKEE (167 aa). Positions 447-498 are disordered; sequence QAWEADQQEEEEEEEARRVEQLSDALLQQEAETMAEQGYRPKPYGHPKIAWN.

It belongs to the TCHP family. In terms of assembly, interacts specifically with keratin proteins including, KRT5, KRT6A, KRT8, KRT14, KRT16 and KRT18. Interacts with KCTD17. In terms of processing, ubiquitinated. Ubiquitination by the BCR(KCTD17) E3 ubiquitin ligase complex results in proteasomal degradation, and induces ciliogenesis. Expressed at high levels in normal urothelial and breast epithelial cells. Also expressed in the smooth muscle and endothelial cells. Reduced expression seen in advanced bladder and breast carcinomas (at protein level). Ubiquitous. Expressed at highest levels in the heart, skeletal muscle, kidney, liver and testis.

It is found in the cytoplasm. Its subcellular location is the cytoskeleton. The protein localises to the cell membrane. The protein resides in the mitochondrion. It localises to the cell junction. It is found in the desmosome. Its subcellular location is the microtubule organizing center. The protein localises to the centrosome. In terms of biological role, tumor suppressor which has the ability to inhibit cell growth and be pro-apoptotic during cell stress. Inhibits cell growth in bladder and prostate cancer cells by a down-regulation of HSPB1 by inhibiting its phosphorylation. May act as a 'capping' or 'branching' protein for keratin filaments in the cell periphery. May regulate K8/K18 filament and desmosome organization mainly at the apical or peripheral regions of simple epithelial cells. Is a negative regulator of ciliogenesis. The protein is Trichoplein keratin filament-binding protein of Homo sapiens (Human).